A 96-amino-acid polypeptide reads, in one-letter code: Molybdopterin synthase sulfur carrier subunit (96 aa).

Residue Gly96 is modified to 1-thioglycine; alternate. Gly96 carries the glycyl adenylate; alternate modification.

It belongs to the MoaD family. MOCS2A subfamily. Heterotetramer; composed of 2 small (MOCS2A) and 2 large (MOCS2B) subunits. C-terminal thiocarboxylation occurs in 2 steps, it is first acyl-adenylated (-COAMP) via the hesA/moeB/thiF part of UBA4, then thiocarboxylated (-COSH) via the rhodanese domain of UBA4.

Its subcellular location is the cytoplasm. Its pathway is cofactor biosynthesis; molybdopterin biosynthesis. Acts as a sulfur carrier required for molybdopterin biosynthesis. Component of the molybdopterin synthase complex that catalyzes the conversion of precursor Z into molybdopterin by mediating the incorporation of 2 sulfur atoms into precursor Z to generate a dithiolene group. In the complex, serves as sulfur donor by being thiocarboxylated (-COSH) at its C-terminus by UBA4. After interaction with MOCS2B, the sulfur is then transferred to precursor Z to form molybdopterin. This is Molybdopterin synthase sulfur carrier subunit from Phaeosphaeria nodorum (strain SN15 / ATCC MYA-4574 / FGSC 10173) (Glume blotch fungus).